Consider the following 182-residue polypeptide: Signal peptidase I (182 aa).

Residues 1 to 13 (MTKQKEKRGRRWP) lie on the Cytoplasmic side of the membrane. The helical transmembrane segment at 14 to 30 (WFVAVCVVATLRLFVFS) threads the bilayer. At 31–182 (NYVVEGKSMM…WPFKQFAFQF (152 aa)) the chain is on the extracellular side. Catalysis depends on residues Ser38 and Lys79.

Belongs to the peptidase S26 family.

It localises to the cell membrane. It catalyses the reaction Cleavage of hydrophobic, N-terminal signal or leader sequences from secreted and periplasmic proteins.. This Bacillus caldolyticus protein is Signal peptidase I (lepB).